Reading from the N-terminus, the 320-residue chain is Glycerol-3-phosphate dehydrogenase [NAD(P)+] (320 aa).

The NADPH site is built by Ser-14, Phe-15, Arg-35, and Lys-109. The sn-glycerol 3-phosphate site is built by Lys-109 and Gly-137. Ala-141 is a binding site for NADPH. Residues Lys-192, Asp-248, Ser-258, Arg-259, and Asn-260 each coordinate sn-glycerol 3-phosphate. Lys-192 acts as the Proton acceptor in catalysis. Arg-259 provides a ligand contact to NADPH. NADPH-binding residues include Leu-283 and Glu-285.

It belongs to the NAD-dependent glycerol-3-phosphate dehydrogenase family.

It is found in the cytoplasm. It catalyses the reaction sn-glycerol 3-phosphate + NAD(+) = dihydroxyacetone phosphate + NADH + H(+). It carries out the reaction sn-glycerol 3-phosphate + NADP(+) = dihydroxyacetone phosphate + NADPH + H(+). The protein operates within membrane lipid metabolism; glycerophospholipid metabolism. Catalyzes the reduction of the glycolytic intermediate dihydroxyacetone phosphate (DHAP) to sn-glycerol 3-phosphate (G3P), the key precursor for phospholipid synthesis. The polypeptide is Glycerol-3-phosphate dehydrogenase [NAD(P)+] (Rickettsia typhi (strain ATCC VR-144 / Wilmington)).